Consider the following 246-residue polypeptide: Small ribosomal subunit protein uS2c (246 aa).

Belongs to the universal ribosomal protein uS2 family.

The protein resides in the plastid. The protein localises to the chloroplast. The protein is Small ribosomal subunit protein uS2c (rps2) of Pelargonium hortorum (Common geranium).